We begin with the raw amino-acid sequence, 313 residues long: Putative S-adenosyl-L-methionine-dependent methyltransferase MMAR_0955 (313 aa).

S-adenosyl-L-methionine is bound by residues Asp132 and 161-162 (DL).

Belongs to the UPF0677 family.

In terms of biological role, exhibits S-adenosyl-L-methionine-dependent methyltransferase activity. This is Putative S-adenosyl-L-methionine-dependent methyltransferase MMAR_0955 from Mycobacterium marinum (strain ATCC BAA-535 / M).